The sequence spans 234 residues: MQNFPPVEWAVSDAPVPYEAALAVMEARARAIREDGAPELVWFLEHPPLYTAGTSARIEDLKDPARFPVFEAGRGGQYTYHGPGQRVAYVMLDVAARGRDVRAFVAHLEAWIIQALAAFNVEGGMRDGRVGVWVDRTEPGGPPREDKIAAIGVRLKRWVSFHGISLNVEPELDHFTGITPCGIADPRYGVTSLADLGRIISMEEADIALKAAFQQVFASPLVRVDPPVTGSVPA.

The 187-residue stretch at 35-221 (DGAPELVWFL…AFQQVFASPL (187 aa)) folds into the BPL/LPL catalytic domain. Residues 74-81 (RGGQYTYH), 150-152 (AIG), and 163-165 (GIS) contribute to the substrate site. Residue cysteine 181 is the Acyl-thioester intermediate of the active site.

Belongs to the LipB family.

Its subcellular location is the cytoplasm. It carries out the reaction octanoyl-[ACP] + L-lysyl-[protein] = N(6)-octanoyl-L-lysyl-[protein] + holo-[ACP] + H(+). It participates in protein modification; protein lipoylation via endogenous pathway; protein N(6)-(lipoyl)lysine from octanoyl-[acyl-carrier-protein]: step 1/2. Functionally, catalyzes the transfer of endogenously produced octanoic acid from octanoyl-acyl-carrier-protein onto the lipoyl domains of lipoate-dependent enzymes. Lipoyl-ACP can also act as a substrate although octanoyl-ACP is likely to be the physiological substrate. The polypeptide is Octanoyltransferase (Hyphomonas neptunium (strain ATCC 15444)).